Here is an 87-residue protein sequence, read N- to C-terminus: MANSPQAKKRARQNEKRFAINKARRSRIRTFLRKVEEAIASGDKEAATAALRAAQPELMRGVTRGVYHKNTASRKISRLAARVKALG.

The segment at 1-22 (MANSPQAKKRARQNEKRFAINK) is disordered.

The protein belongs to the bacterial ribosomal protein bS20 family.

Its function is as follows. Binds directly to 16S ribosomal RNA. The protein is Small ribosomal subunit protein bS20 of Ruegeria sp. (strain TM1040) (Silicibacter sp.).